Consider the following 169-residue polypeptide: uncharacterized protein (169 aa).

The chain crosses the membrane as a helical span at residues 97 to 117 (IVIFCILVIVAFVIWLVVWLF). The segment at 137–169 (NYSGLPTPQPTPTHYPAEQYSYDPARDRDNYRY) is disordered. Basic and acidic residues predominate over residues 160–169 (PARDRDNYRY).

It localises to the membrane. This is an uncharacterized protein from Caenorhabditis elegans.